A 647-amino-acid polypeptide reads, in one-letter code: MIKITFPDGAVREFESGVTTFDIAESISKSLAKKALAGKFNDQLIDTTRAIEEDGSIEIVTPDHKDAYEVLRHSAAHLFAQAAKRLFPNLHLGVGPAIAEGFYYDTDNAEGQISNEDLPRIEAEMQKIVTENYPCIREEVTKEEALELFKDDPYKVELINEHAGAGLTVYRQGEFVDLCRGPHVPSTGRIQVFHLLNVAGAYWRGNSDNNMMQRIYGTAWFDKKDLKAYLTRLEEAKERDHRKLGKELDLFMISQEVGQGLPFWLPDGATIRRTLERYITDKELASGYQHVYTPPLASVELYKTSGHWDHYQEDMFPVMDMGDGEEFVLRPMNCPHHIQVYKNHVRSYRELPIRIAELGMMHRYEKSGALSGLQRVREMTLNDGHIFVTPEQIQEEFRRALQLIIDVYADFNLTDYRFRLSYRDPNDTHKYYDNDEMWENAQSMLKAALDEMGVDYFEAEGEAAFYGPKLDIQVKTALGNEETLSTIQLDFLLPERFDLKYIGADGEEHRPVMIHRGVISTMERFTAILIETYKGAFPTWLAPHQVTVIPISNEAHIDYAWEVAKTLRDRGVRADVDDRNEKMQYKIRASQTSKIPYQLIVGDKEMEDKSVNVRRYGSKATHTESVEEFVENILADIARKSRPDAQA.

Residues 1–61 (MIKITFPDGA…EEDGSIEIVT (61 aa)) form the TGS domain. Positions 240–538 (DHRKLGKELD…LIETYKGAFP (299 aa)) are catalytic. Residues cysteine 334, histidine 385, and histidine 515 each coordinate Zn(2+).

This sequence belongs to the class-II aminoacyl-tRNA synthetase family. In terms of assembly, homodimer. Zn(2+) serves as cofactor.

The protein localises to the cytoplasm. The catalysed reaction is tRNA(Thr) + L-threonine + ATP = L-threonyl-tRNA(Thr) + AMP + diphosphate + H(+). In terms of biological role, catalyzes the attachment of threonine to tRNA(Thr) in a two-step reaction: L-threonine is first activated by ATP to form Thr-AMP and then transferred to the acceptor end of tRNA(Thr). Also edits incorrectly charged L-seryl-tRNA(Thr). The sequence is that of Threonine--tRNA ligase from Streptococcus pyogenes serotype M4 (strain MGAS10750).